Reading from the N-terminus, the 262-residue chain is tRNA pseudouridine synthase A (262 aa).

Asp55 (nucleophile) is an active-site residue. Residue Tyr116 participates in substrate binding.

This sequence belongs to the tRNA pseudouridine synthase TruA family. Homodimer.

It catalyses the reaction uridine(38/39/40) in tRNA = pseudouridine(38/39/40) in tRNA. In terms of biological role, formation of pseudouridine at positions 38, 39 and 40 in the anticodon stem and loop of transfer RNAs. This Bdellovibrio bacteriovorus (strain ATCC 15356 / DSM 50701 / NCIMB 9529 / HD100) protein is tRNA pseudouridine synthase A.